A 277-amino-acid polypeptide reads, in one-letter code: uncharacterized protein (277 aa).

The next 7 membrane-spanning stretches (helical) occupy residues 23–43, 61–81, 117–137, 144–164, 197–217, 221–241, and 243–263; these read CIGG…TAFI, FLIY…IIGG, LVLL…FGIF, IIGA…VISL, YIIL…IVVL, IIDI…IIYI, and IKGI…VFSI.

The protein to M.jannaschii MJ1189.

It localises to the cell membrane. This is an uncharacterized protein from Methanocaldococcus jannaschii (strain ATCC 43067 / DSM 2661 / JAL-1 / JCM 10045 / NBRC 100440) (Methanococcus jannaschii).